We begin with the raw amino-acid sequence, 224 residues long: Phosphoribosylformylglycinamidine synthase subunit PurQ (224 aa).

One can recognise a Glutamine amidotransferase type-1 domain in the interval 2–224 (KFAVIQFPGS…SILNHAEVKA (223 aa)). The active-site Nucleophile is the Cys86. Catalysis depends on residues His195 and Glu197.

In terms of assembly, part of the FGAM synthase complex composed of 1 PurL, 1 PurQ and 2 PurS subunits.

Its subcellular location is the cytoplasm. The catalysed reaction is N(2)-formyl-N(1)-(5-phospho-beta-D-ribosyl)glycinamide + L-glutamine + ATP + H2O = 2-formamido-N(1)-(5-O-phospho-beta-D-ribosyl)acetamidine + L-glutamate + ADP + phosphate + H(+). It catalyses the reaction L-glutamine + H2O = L-glutamate + NH4(+). The protein operates within purine metabolism; IMP biosynthesis via de novo pathway; 5-amino-1-(5-phospho-D-ribosyl)imidazole from N(2)-formyl-N(1)-(5-phospho-D-ribosyl)glycinamide: step 1/2. In terms of biological role, part of the phosphoribosylformylglycinamidine synthase complex involved in the purines biosynthetic pathway. Catalyzes the ATP-dependent conversion of formylglycinamide ribonucleotide (FGAR) and glutamine to yield formylglycinamidine ribonucleotide (FGAM) and glutamate. The FGAM synthase complex is composed of three subunits. PurQ produces an ammonia molecule by converting glutamine to glutamate. PurL transfers the ammonia molecule to FGAR to form FGAM in an ATP-dependent manner. PurS interacts with PurQ and PurL and is thought to assist in the transfer of the ammonia molecule from PurQ to PurL. This is Phosphoribosylformylglycinamidine synthase subunit PurQ from Lactobacillus delbrueckii subsp. bulgaricus (strain ATCC 11842 / DSM 20081 / BCRC 10696 / JCM 1002 / NBRC 13953 / NCIMB 11778 / NCTC 12712 / WDCM 00102 / Lb 14).